The following is a 167-amino-acid chain: Peptide deformylase (167 aa).

Fe cation is bound by residues Cys90 and His132. Glu133 is a catalytic residue. His136 contributes to the Fe cation binding site.

This sequence belongs to the polypeptide deformylase family. Fe(2+) is required as a cofactor.

The catalysed reaction is N-terminal N-formyl-L-methionyl-[peptide] + H2O = N-terminal L-methionyl-[peptide] + formate. Functionally, removes the formyl group from the N-terminal Met of newly synthesized proteins. Requires at least a dipeptide for an efficient rate of reaction. N-terminal L-methionine is a prerequisite for activity but the enzyme has broad specificity at other positions. The protein is Peptide deformylase of Dehalococcoides mccartyi (strain ATCC BAA-2100 / JCM 16839 / KCTC 5957 / BAV1).